We begin with the raw amino-acid sequence, 205 residues long: CASP-like protein 0U1 (205 aa).

The Cytoplasmic portion of the chain corresponds to 1 to 38 (MDDAPGASDEAREPLLKRVGASVEGTSLMNHRLMKNPK). A helical transmembrane segment spans residues 39 to 57 (FRALLVESLMALTTFSFMA). The Extracellular portion of the chain corresponds to 58-89 (KQTEGLAGPELSTLNDCGEAGCGFTKFYQFKG). A helical transmembrane segment spans residues 90–110 (VVGVYAGFWAYTVILIAMYVI). Residues 111 to 124 (RKAPPPGTEFASYA) lie on the Cytoplasmic side of the membrane. The helical transmembrane segment at 125 to 145 (LFTAAMATFVVMSITECASVV) threads the bilayer. Residues 146–159 (LSSDYYVCKNADYS) lie on the Extracellular side of the membrane. Residues 160 to 180 (LVSLIFAAATIVLNCLTCAFA) traverse the membrane as a helical segment. Over 181-205 (WRQWGELKFVGLPKTLSALTETYPG) the chain is Cytoplasmic.

It belongs to the Casparian strip membrane proteins (CASP) family. As to quaternary structure, homodimer and heterodimers.

The protein localises to the cell membrane. The polypeptide is CASP-like protein 0U1 (Ostreococcus lucimarinus (strain CCE9901)).